The chain runs to 457 residues: Argininosuccinate lyase (457 aa).

This sequence belongs to the lyase 1 family. Argininosuccinate lyase subfamily.

It is found in the cytoplasm. It catalyses the reaction 2-(N(omega)-L-arginino)succinate = fumarate + L-arginine. It functions in the pathway amino-acid biosynthesis; L-arginine biosynthesis; L-arginine from L-ornithine and carbamoyl phosphate: step 3/3. The protein is Argininosuccinate lyase of Yersinia pseudotuberculosis serotype IB (strain PB1/+).